A 124-amino-acid chain; its full sequence is Small ribosomal subunit protein uS12 (124 aa).

Aspartate 89 bears the 3-methylthioaspartic acid mark. Residues 105–124 (AGVKDRKKGRSKYGAKRPKA) are disordered. The span at 109–124 (DRKKGRSKYGAKRPKA) shows a compositional bias: basic residues.

This sequence belongs to the universal ribosomal protein uS12 family. Part of the 30S ribosomal subunit. Contacts proteins S8 and S17. May interact with IF1 in the 30S initiation complex.

With S4 and S5 plays an important role in translational accuracy. In terms of biological role, interacts with and stabilizes bases of the 16S rRNA that are involved in tRNA selection in the A site and with the mRNA backbone. Located at the interface of the 30S and 50S subunits, it traverses the body of the 30S subunit contacting proteins on the other side and probably holding the rRNA structure together. The combined cluster of proteins S8, S12 and S17 appears to hold together the shoulder and platform of the 30S subunit. This is Small ribosomal subunit protein uS12 from Dichelobacter nodosus (strain VCS1703A).